The chain runs to 119 residues: uncharacterized protein (119 aa).

C9 and C12 are disulfide-bonded.

The protein belongs to the ArsC family.

This is an uncharacterized protein from Streptomyces viridochromogenes.